The primary structure comprises 525 residues: cAMP-dependent protein kinase regulatory subunit (525 aa).

The tract at residues 28–213 (QFCANWFNSK…RIRGSIGNNL (186 aa)) is dimerization and phosphorylation. 2 disordered regions span residues 114–146 (MDAS…SSLG) and 170–196 (SVSA…TVIP). The segment covering 124 to 146 (PAPATPAAPAAPAAPAAPFSSLG) has biased composition (low complexity). At S170 the chain carries Phosphoserine; by autocatalysis. A nucleoside 3',5'-cyclic phosphate contacts are provided by residues 214-345 (LFRN…FLMD) and 348-472 (LFER…TYGD). The 3',5'-cyclic AMP site is built by E295, R304, and E417. Residues 497–525 (SGADTSFPHPMDSSAKPGEGAWSAPNPFA) form a disordered region.

Belongs to the cAMP-dependent kinase regulatory chain family. As to quaternary structure, tetramer, composed of 2 regulatory (R) and 2 catalytic (C) subunits. In the presence of cAMP it dissociates into 2 active monomeric C subunits and an R dimer.

This is cAMP-dependent protein kinase regulatory subunit (PKAR) from Mycosarcoma maydis (Corn smut fungus).